The primary structure comprises 228 residues: Leucyl/phenylalanyl-tRNA--protein transferase (228 aa).

This sequence belongs to the L/F-transferase family.

It localises to the cytoplasm. The catalysed reaction is N-terminal L-lysyl-[protein] + L-leucyl-tRNA(Leu) = N-terminal L-leucyl-L-lysyl-[protein] + tRNA(Leu) + H(+). It catalyses the reaction N-terminal L-arginyl-[protein] + L-leucyl-tRNA(Leu) = N-terminal L-leucyl-L-arginyl-[protein] + tRNA(Leu) + H(+). It carries out the reaction L-phenylalanyl-tRNA(Phe) + an N-terminal L-alpha-aminoacyl-[protein] = an N-terminal L-phenylalanyl-L-alpha-aminoacyl-[protein] + tRNA(Phe). Functionally, functions in the N-end rule pathway of protein degradation where it conjugates Leu, Phe and, less efficiently, Met from aminoacyl-tRNAs to the N-termini of proteins containing an N-terminal arginine or lysine. The sequence is that of Leucyl/phenylalanyl-tRNA--protein transferase from Lawsonia intracellularis (strain PHE/MN1-00).